The following is a 174-amino-acid chain: Shikimate kinase 2 (174 aa).

ATP is bound at residue Gly12–Thr17. Residues Thr16 and Asp32 each contribute to the Mg(2+) site. Substrate contacts are provided by Asp34, Arg58, and Gly79. Positions Ala112–Lys126 are LID domain. Residue Arg120 participates in ATP binding. Arg139 serves as a coordination point for substrate. Position 155 (Gln155) interacts with ATP.

It belongs to the shikimate kinase family. AroL subfamily. In terms of assembly, monomer. Mg(2+) serves as cofactor.

It localises to the cytoplasm. The enzyme catalyses shikimate + ATP = 3-phosphoshikimate + ADP + H(+). The protein operates within metabolic intermediate biosynthesis; chorismate biosynthesis; chorismate from D-erythrose 4-phosphate and phosphoenolpyruvate: step 5/7. Catalyzes the specific phosphorylation of the 3-hydroxyl group of shikimic acid using ATP as a cosubstrate. In Yersinia enterocolitica serotype O:8 / biotype 1B (strain NCTC 13174 / 8081), this protein is Shikimate kinase 2.